The sequence spans 148 residues: Deoxyuridine 5'-triphosphate nucleotidohydrolase (148 aa).

Residues 67 to 69 (RSG), asparagine 80, 84 to 86 (LID), and methionine 94 contribute to the substrate site.

This sequence belongs to the dUTPase family. Mg(2+) serves as cofactor.

It carries out the reaction dUTP + H2O = dUMP + diphosphate + H(+). The protein operates within pyrimidine metabolism; dUMP biosynthesis; dUMP from dCTP (dUTP route): step 2/2. In terms of biological role, this enzyme is involved in nucleotide metabolism: it produces dUMP, the immediate precursor of thymidine nucleotides and it decreases the intracellular concentration of dUTP so that uracil cannot be incorporated into DNA. The chain is Deoxyuridine 5'-triphosphate nucleotidohydrolase from Burkholderia thailandensis (strain ATCC 700388 / DSM 13276 / CCUG 48851 / CIP 106301 / E264).